The following is a 411-amino-acid chain: Arginine deiminase (411 aa).

Cys-401 functions as the Amidino-cysteine intermediate in the catalytic mechanism.

This sequence belongs to the arginine deiminase family.

The protein resides in the cytoplasm. The enzyme catalyses L-arginine + H2O = L-citrulline + NH4(+). It participates in amino-acid degradation; L-arginine degradation via ADI pathway; carbamoyl phosphate from L-arginine: step 1/2. In Staphylococcus aureus (strain bovine RF122 / ET3-1), this protein is Arginine deiminase.